The sequence spans 1405 residues: DNA-directed RNA polymerase subunit beta' (1405 aa).

Cysteine 70, cysteine 72, cysteine 85, and cysteine 88 together coordinate Zn(2+). The Mg(2+) site is built by aspartate 460, aspartate 462, and aspartate 464. Zn(2+) contacts are provided by cysteine 814, cysteine 888, cysteine 895, and cysteine 898.

Belongs to the RNA polymerase beta' chain family. As to quaternary structure, the RNAP catalytic core consists of 2 alpha, 1 beta, 1 beta' and 1 omega subunit. When a sigma factor is associated with the core the holoenzyme is formed, which can initiate transcription. It depends on Mg(2+) as a cofactor. Requires Zn(2+) as cofactor.

It catalyses the reaction RNA(n) + a ribonucleoside 5'-triphosphate = RNA(n+1) + diphosphate. In terms of biological role, DNA-dependent RNA polymerase catalyzes the transcription of DNA into RNA using the four ribonucleoside triphosphates as substrates. This Shewanella baltica (strain OS223) protein is DNA-directed RNA polymerase subunit beta'.